A 297-amino-acid polypeptide reads, in one-letter code: MHFWWTAISAGLLCLPQALGRSDSPNYTVEELWKLETTFWDNFLYPANVEQMEAINSTLFTPDVQGRVDITRVFNGSELNTEYIFGLFSDPDHVSLVGVPVDYSIVQFIAQGNIASATTVVTFNATSFGNLLIPVTIDTWIMWDSNGQIVQYDATFRWFGFLLDTLVETLAASINGTTSEATAALTQLLATTICATHDQYCTGANQQYDNNTACYDFLTTAIPLGKDYELGRNTLLCREVHEHMVQYDPALHCPHIGPTGGDYCVDDQTYAQKVLQKYFNQSWIVGVPSTGDIWLGD.

A signal peptide spans 1–20; it reads MHFWWTAISAGLLCLPQALG. Residues N26, N56, N75, N124, N175, N210, and N280 are each glycosylated (N-linked (GlcNAc...) asparagine).

Belongs to the bfoA family.

Part of the gene cluster that mediates the biosynthesis of bifonsecin B, a dimeric gamma-naphthopyrone. The first step in the biosynthesis of bifonsecin B is the production of gamma-naphthopyrone precursor YWA1 by the non-reducing polyketide synthase albA, via condensation of one acetyl-CoA starter unit with 6 malonyl-CoA units. YWA1 is then methylated by bfoE at position C-6 to yield foncesin which is further methylated at position C-8 by bfoD to produce fonsecin B. A key enzyme in the biosynthetic pathway is the cytochrome P450 monooxygenase bfoB which catalyzes the oxidative dimerization of fonsecin B to bifonsecin B. Bfob also catalyzes the oxidative dimerization of rubrofusarin B into nigerone. The stereoselectivity of bfoB is influenced by the two natural monomeric substrates; homodimerization of fonsecin B yields a stereochemically pure biaryl, M-foncerine B, while rubrofusarin B yields a mixture of enantiomers M- and P-nigerone. The function of bfoA within the bifonsecin B biosynthesis pathway has not been determined yet. This chain is Bifonsecin B biosynthesis cluster protein A, found in Aspergillus brasiliensis (strain CBS 101740 / IMI 381727 / IBT 21946).